The sequence spans 696 residues: DNA ligase (696 aa).

Residues 36–40 (DAEYD), 85–86 (SL), and glutamate 123 each bind NAD(+). The active-site N6-AMP-lysine intermediate is the lysine 125. NAD(+)-binding residues include arginine 146, glutamate 181, lysine 319, and lysine 343. Cysteine 437, cysteine 440, cysteine 455, and cysteine 461 together coordinate Zn(2+). In terms of domain architecture, BRCT spans 618-696 (PEGTSLAGKT…EDGLKALLGL (79 aa)).

It belongs to the NAD-dependent DNA ligase family. LigA subfamily. The cofactor is Mg(2+). Requires Mn(2+) as cofactor.

It catalyses the reaction NAD(+) + (deoxyribonucleotide)n-3'-hydroxyl + 5'-phospho-(deoxyribonucleotide)m = (deoxyribonucleotide)n+m + AMP + beta-nicotinamide D-nucleotide.. DNA ligase that catalyzes the formation of phosphodiester linkages between 5'-phosphoryl and 3'-hydroxyl groups in double-stranded DNA using NAD as a coenzyme and as the energy source for the reaction. It is essential for DNA replication and repair of damaged DNA. The sequence is that of DNA ligase from Bordetella pertussis (strain Tohama I / ATCC BAA-589 / NCTC 13251).